The following is a 316-amino-acid chain: DDRGK domain-containing protein 1 (316 aa).

The Lumenal segment spans residues 1 to 3 (MVE). Residues 4–24 (LDYLFLGSVGFLTIALMLIIL) traverse the membrane as a helical segment. Topologically, residues 25-316 (RIIKLYFDEK…VEHVSELTAA (292 aa)) are cytoplasmic. The tract at residues 147-187 (LEQEKEKRLQKEREKQMEQEEEERKRKCREREEREKREEEE) is disordered.

The protein belongs to the DDRGK1 family.

It is found in the endoplasmic reticulum membrane. Substrate adapter for ufmylation, the covalent attachment of the ubiquitin-like modifier UFM1 to substrate proteins. This chain is DDRGK domain-containing protein 1, found in Brugia malayi (Filarial nematode worm).